The chain runs to 255 residues: MVDPVAALCNYNVLEVIFSYLELEDLSHCSQVCKSWYHFLNDENSDVWRWHCLNKLPKEALKSDLLSSVSTYKTKLRAYFHAWSPNDCSRNVYIKPNGFTLHRNPVAQSTDAARGKIGFRHGRHTWEVIWEGPLGTVAVIGISTKEAALQCHGYVALLGSDDQSWGWNLVENHLLHNGDMQGSYPLLNNAPKYQVGERIRVILDCEDNTLSFEKNYEFLGVAFRGLPDKKLYPTVSAVYGNTEVSMVYLGTPLDG.

Residues 3–51 enclose the F-box domain; the sequence is DPVAALCNYNVLEVIFSYLELEDLSHCSQVCKSWYHFLNDENSDVWRWH. Positions 61 to 253 constitute a B30.2/SPRY domain; that stretch reads LKSDLLSSVS…VSMVYLGTPL (193 aa).

Belongs to the FBXO45/Fsn family. As to quaternary structure, component of an E3 ubiquitin ligase complex composed of hiw and Fsn.

It localises to the synapse. The protein operates within protein modification; protein ubiquitination. Functionally, required in the presynaptic motoneuron to down-regulate the levels of wnd and restrain synaptic terminal growth at the neuromuscular junction (NMJ). The polypeptide is F-box/SPRY domain-containing protein 1 (Drosophila erecta (Fruit fly)).